The chain runs to 479 residues: DNA polymerase IV (479 aa).

Residues 7–189 enclose the UmuC domain; the sequence is ILHLDMDAFF…MTVRTLPGVG (183 aa). Mg(2+) contacts are provided by Asp11 and Asp105. Glu106 is a catalytic residue. Disordered regions lie at residues 357–400 and 430–479; these read AGDR…GHGW and DPEL…TSRP. Positions 381–396 are enriched in basic and acidic residues; that stretch reads AERRWPSGHDVRHTEL.

It belongs to the DNA polymerase type-Y family. Monomer. It depends on Mg(2+) as a cofactor.

It localises to the cytoplasm. It catalyses the reaction DNA(n) + a 2'-deoxyribonucleoside 5'-triphosphate = DNA(n+1) + diphosphate. In terms of biological role, poorly processive, error-prone DNA polymerase involved in untargeted mutagenesis. Copies undamaged DNA at stalled replication forks, which arise in vivo from mismatched or misaligned primer ends. These misaligned primers can be extended by PolIV. Exhibits no 3'-5' exonuclease (proofreading) activity. May be involved in translesional synthesis, in conjunction with the beta clamp from PolIII. This chain is DNA polymerase IV, found in Streptomyces coelicolor (strain ATCC BAA-471 / A3(2) / M145).